Reading from the N-terminus, the 234-residue chain is Glucosamine-6-phosphate deaminase (234 aa).

Catalysis depends on D63, which acts as the Proton acceptor; for enolization step. The For ring-opening step role is filled by N129. H131 (proton acceptor; for ring-opening step) is an active-site residue. E136 functions as the For ring-opening step in the catalytic mechanism.

It belongs to the glucosamine/galactosamine-6-phosphate isomerase family. NagB subfamily.

It carries out the reaction alpha-D-glucosamine 6-phosphate + H2O = beta-D-fructose 6-phosphate + NH4(+). It participates in amino-sugar metabolism; N-acetylneuraminate degradation; D-fructose 6-phosphate from N-acetylneuraminate: step 5/5. Catalyzes the reversible isomerization-deamination of glucosamine 6-phosphate (GlcN6P) to form fructose 6-phosphate (Fru6P) and ammonium ion. The polypeptide is Glucosamine-6-phosphate deaminase (Listeria welshimeri serovar 6b (strain ATCC 35897 / DSM 20650 / CCUG 15529 / CIP 8149 / NCTC 11857 / SLCC 5334 / V8)).